Reading from the N-terminus, the 153-residue chain is MFEDPEIRIHKLQPCTQCPRLEDLWFSWYFRYIHDRCLRSSACHQDIHGASLYAPLALKQTYEVYFGYDCTLRKYGRFRQKLPVKTDFRKNGARRRPVTGRSPRTGEEAQWICNHSEQVRPEAFIIGSVCCFSGMIYPHIQRPDPVNRSMNDQ.

This is an uncharacterized protein from Escherichia coli (strain K12).